The primary structure comprises 137 residues: Nucleoside diphosphate kinase (137 aa).

ATP is bound by residues lysine 11, phenylalanine 59, arginine 87, threonine 93, arginine 104, and asparagine 114. Histidine 117 (pros-phosphohistidine intermediate) is an active-site residue.

It belongs to the NDK family. As to quaternary structure, homotetramer. Requires Mg(2+) as cofactor.

The protein resides in the cytoplasm. It carries out the reaction a 2'-deoxyribonucleoside 5'-diphosphate + ATP = a 2'-deoxyribonucleoside 5'-triphosphate + ADP. It catalyses the reaction a ribonucleoside 5'-diphosphate + ATP = a ribonucleoside 5'-triphosphate + ADP. Functionally, major role in the synthesis of nucleoside triphosphates other than ATP. The ATP gamma phosphate is transferred to the NDP beta phosphate via a ping-pong mechanism, using a phosphorylated active-site intermediate. The sequence is that of Nucleoside diphosphate kinase from Frankia alni (strain DSM 45986 / CECT 9034 / ACN14a).